A 118-amino-acid polypeptide reads, in one-letter code: UPF0295 protein BCE33L0445 (118 aa).

A run of 2 helical transmembrane segments spans residues 12–32 and 43–63; these read IRTFALSLVFIGLFIAYLGVF and FMMVGFLAVIASTVVYFWIGM.

It belongs to the UPF0295 family.

It localises to the cell membrane. The sequence is that of UPF0295 protein BCE33L0445 from Bacillus cereus (strain ZK / E33L).